We begin with the raw amino-acid sequence, 370 residues long: NSFL1 cofactor p47 (370 aa).

The disordered stretch occupies residues 54-73 (SQATPSSVSRGTAPSDNRVT). Serine 74, serine 102, and serine 114 each carry phosphoserine. 2 disordered regions span residues 80-116 (HDQD…RSPN) and 137-157 (VTKS…GYRL). The Nuclear localization signal signature appears at 109 to 115 (PPRKRSP). At serine 140 the chain carries Phosphoserine; by CDK1. Tyrosine 167 bears the Phosphotyrosine mark. The short motif at 172–175 (RRRH) is the Nuclear localization signal element. 3 positions are modified to phosphoserine: serine 176, serine 192, and serine 272. The SEP domain maps to 179-244 (DVHVVLKLWK…MEDHRDEDFV (66 aa)). The interval 272 to 292 (SPAQQAENEAKASSSISIDES) is disordered. Positions 291–368 (ESQPTTNIQI…NLLNAVIVQR (78 aa)) constitute a UBX domain.

Part of a ternary complex containing STX5A, NSFL1C and VCP. NSFL1C forms a homotrimer that binds to one end of a VCP homohexamer. The complex binds to membranes enriched in phosphatidylethanolamine-containing lipids and promotes Golgi membrane fusion. Interaction with VCIP135 leads to dissociation of the complex via ATP hydrolysis by VCP. Binds ubiquitin and mono-ubiquitinated proteins via its N-terminal UBA-like domain when bound to VCP. In terms of processing, phosphorylated during mitosis. Phosphorylation inhibits interaction with Golgi membranes and is required for the fragmentation of the Golgi stacks during mitosis.

It is found in the nucleus. Its subcellular location is the golgi apparatus. The protein resides in the golgi stack. The protein localises to the chromosome. It localises to the cytoplasm. It is found in the cytoskeleton. Its subcellular location is the microtubule organizing center. The protein resides in the centrosome. Functionally, reduces the ATPase activity of VCP. Necessary for the fragmentation of Golgi stacks during mitosis and for VCP-mediated reassembly of Golgi stacks after mitosis. May play a role in VCP-mediated formation of transitional endoplasmic reticulum (tER). Inhibits the activity of CTSL (in vitro). Together with UBXN2B/p37, regulates the centrosomal levels of kinase AURKA/Aurora A during mitotic progression by promoting AURKA removal from centrosomes in prophase. Also, regulates spindle orientation during mitosis. This chain is NSFL1 cofactor p47 (NSFL1C), found in Bos taurus (Bovine).